Reading from the N-terminus, the 83-residue chain is Putative snRNP Sm-like protein (83 aa).

The Sm domain occupies 9 to 81; the sequence is KPMDVLKSAL…VIFVSPSKGD (73 aa).

The protein belongs to the snRNP Sm proteins family.

In Thermoplasma acidophilum (strain ATCC 25905 / DSM 1728 / JCM 9062 / NBRC 15155 / AMRC-C165), this protein is Putative snRNP Sm-like protein.